A 181-amino-acid polypeptide reads, in one-letter code: Acireductone dioxygenase 2 (181 aa).

His-97, His-99, Glu-103, and His-141 together coordinate Fe(2+). Positions 97, 99, 103, and 141 each coordinate Ni(2+).

The protein belongs to the acireductone dioxygenase (ARD) family. Monomer. Fe(2+) serves as cofactor. Requires Ni(2+) as cofactor.

It catalyses the reaction 1,2-dihydroxy-5-(methylsulfanyl)pent-1-en-3-one + O2 = 3-(methylsulfanyl)propanoate + CO + formate + 2 H(+). The catalysed reaction is 1,2-dihydroxy-5-(methylsulfanyl)pent-1-en-3-one + O2 = 4-methylsulfanyl-2-oxobutanoate + formate + 2 H(+). It participates in amino-acid biosynthesis; L-methionine biosynthesis via salvage pathway; L-methionine from S-methyl-5-thio-alpha-D-ribose 1-phosphate: step 5/6. In terms of biological role, catalyzes 2 different reactions between oxygen and the acireductone 1,2-dihydroxy-3-keto-5-methylthiopentene (DHK-MTPene) depending upon the metal bound in the active site. Fe-containing acireductone dioxygenase (Fe-ARD) produces formate and 2-keto-4-methylthiobutyrate (KMTB), the alpha-ketoacid precursor of methionine in the methionine recycle pathway. Ni-containing acireductone dioxygenase (Ni-ARD) produces methylthiopropionate, carbon monoxide and formate, and does not lie on the methionine recycle pathway. The chain is Acireductone dioxygenase 2 from Pectobacterium atrosepticum (strain SCRI 1043 / ATCC BAA-672) (Erwinia carotovora subsp. atroseptica).